The chain runs to 1005 residues: MGSAEDAVKEKLLWNVKKEVKQIMEEAVTRKFVHEDSSHIIALCGAVEACLLHQLRRRAAGFLRSDKMAALFTKVGKTCPVAEDICHKVQELQQQAEGRKPSGGSQEALRKQGSTGGKAPALSPQALKHIWVRTALMEKVLDRVVQYLAENCSKYYEKEALLADPVFGPILACLLVGPCALEYTKLKTADHYWTDPSADELVQRHRIRGPPNRQDSPAKRPALGIRKRHSSGSASEDRLAACAREYVESLHQNSRTRLLYGKNNVLVQPKEDMEAVPGYLSLHQSAENLTLKWTPNQLMNGTLGDSELEKSVYWDYALVVPFSQIVCIHCHQQKSGGTLVLVSQDGIQRPPLHFPQGGHLLSFLSCLENGLLPRGQLEPPLWTQQGKGKVFPKLRKRSSIRSIDVEELGVGRATDYVFRIIYPGHRHEHNAGDMIEMQGFGPSLTAWHLEPLCSQGSSCLSCSSSSSPYATPSHCSCIPDRLPLRLLCESMKRQIVSRAFYGWLAYCRHLSTVRTHLSALVHHNIIPPDRPPGASGGLTKDVWSKYQKDEKNYKELELLRQVYYGGVEHEIRKDVWPFLLGHYKFGMSKKEMEQVDTAVAARYQQVLAEWKACEVVVRQREREAHPATLTKFSSGSSIDSHVQRLVHRDSTISNDVFISVDDLEPSGPQDLEDSKPKREQEPGAGTPGIAAAEQQSVEFDSPDSGLPSSRNYSVASGIQSSLDEAQSVGFEDDGAGEDGSEGPATAAHTFPGPHDPGQETLAPASELEAGQELAAVCAAAYTIELLDTVALNLHRIDKDVQRCDRNYWYFTTSNLERLRDIMCSYVWEHLDMGYVQGMCDLLAPLLVILDNDQLAYSCFSHLMKRMGQNFPSGGAMDSHFANMRSLIQILDSELFELMHQNGDYTHFYFCYRWFLLDFKRELLYEDVFAVWEVIWAARRISSEHFVLFIALALVEAYREIIRDNNMDFTDIIKFFNERAERHDAQEILRIARDLVHKVQMLIDNK.

The region spanning 34–191 is the RUN domain; it reads HEDSSHIIAL…EYTKLKTADH (158 aa). 2 disordered regions span residues 95–121 and 205–236; these read QAEGRKPSGGSQEALRKQGSTGGKAPA and HRIRGPPNRQDSPAKRPALGIRKRHSSGSASE. 2 positions are modified to phosphoserine: Ser402 and Leu444. The region spanning 566 to 938 is the Rab-GAP TBC domain; sequence GVEHEIRKDV…AVWEVIWAAR (373 aa). 2 disordered regions span residues 657 to 687 and 729 to 761; these read FISVDDLEPSGPQDLEDSKPKREQEPGAGTP and GFEDDGAGEDGSEGPATAAHTFPGPHDPGQETL. The segment covering 672 to 681 has biased composition (basic and acidic residues); it reads EDSKPKREQE. Positions 730–740 are enriched in acidic residues; sequence FEDDGAGEDGS.

It belongs to the RUTBC family. In terms of assembly, interacts with RAB4A, RAB11A, RAP1A, RAP1B, RAP2A and RAP2B. No interaction with RAB27A. Interacts with RAB9A. In terms of tissue distribution, widely expressed.

It is found in the cytoplasm. Its subcellular location is the melanosome. Possesses GTPase activator activity towards RAB32, RAB33B and RAB38. Regulates the trafficking of melanogenic enzymes TYR, TYRP1 and DCT/TYRP2 to melanosomes in melanocytes by inactivating RAB32 and RAB38. Inhibits RAB32 and RAB38 activation both directly by promoting their GTPase activity and indirectly by disrupting the RAB9A-HPS4 interaction which is required for RAB32/38 activation. This chain is Small G protein signaling modulator 2 (Sgsm2), found in Mus musculus (Mouse).